A 940-amino-acid polypeptide reads, in one-letter code: Isoleucine--tRNA ligase (940 aa).

The 'HIGH' region signature appears at 58–68 (PYANGDIHIGH). Residue E564 coordinates L-isoleucyl-5'-AMP. Residues 605–609 (KMSKS) carry the 'KMSKS' region motif. K608 serves as a coordination point for ATP. Zn(2+) is bound by residues C903, C906, C923, and C926.

It belongs to the class-I aminoacyl-tRNA synthetase family. IleS type 1 subfamily. As to quaternary structure, monomer. The cofactor is Zn(2+).

The protein localises to the cytoplasm. The enzyme catalyses tRNA(Ile) + L-isoleucine + ATP = L-isoleucyl-tRNA(Ile) + AMP + diphosphate. In terms of biological role, catalyzes the attachment of isoleucine to tRNA(Ile). As IleRS can inadvertently accommodate and process structurally similar amino acids such as valine, to avoid such errors it has two additional distinct tRNA(Ile)-dependent editing activities. One activity is designated as 'pretransfer' editing and involves the hydrolysis of activated Val-AMP. The other activity is designated 'posttransfer' editing and involves deacylation of mischarged Val-tRNA(Ile). The sequence is that of Isoleucine--tRNA ligase from Shewanella pealeana (strain ATCC 700345 / ANG-SQ1).